The primary structure comprises 129 residues: UPF0344 protein USA300HOU_0928 (129 aa).

4 helical membrane passes run 1 to 21, 36 to 56, 67 to 87, and 99 to 119; these read MLHLHILSWVLAIILFIATYL, LHMILRLFMLLTLISGFWILI, MLLTLKMLCGVAVVGLMEVSI, and MFWITIALIIITMVLGVILPL.

This sequence belongs to the UPF0344 family.

The protein localises to the cell membrane. This Staphylococcus aureus (strain USA300 / TCH1516) protein is UPF0344 protein USA300HOU_0928.